A 312-amino-acid polypeptide reads, in one-letter code: Transcription initiation factor IIB 1 (312 aa).

The TFIIB-type zinc finger occupies 12 to 43 (EIERCPECGSTNLIRDYEHGELVCGECGAVIE). 4 residues coordinate Zn(2+): C16, C19, C35, and C38. A run of 2 repeats spans residues 129–212 (QELE…SRYL) and 223–304 (DYIS…ELTE).

This sequence belongs to the TFIIB family.

In terms of biological role, stabilizes TBP binding to an archaeal box-A promoter. Also responsible for recruiting RNA polymerase II to the pre-initiation complex (DNA-TBP-TFIIB). The sequence is that of Transcription initiation factor IIB 1 from Thermoplasma volcanium (strain ATCC 51530 / DSM 4299 / JCM 9571 / NBRC 15438 / GSS1).